The following is a 94-amino-acid chain: Phosphoribosyl-ATP pyrophosphatase (94 aa).

Belongs to the PRA-PH family.

It is found in the cytoplasm. The catalysed reaction is 1-(5-phospho-beta-D-ribosyl)-ATP + H2O = 1-(5-phospho-beta-D-ribosyl)-5'-AMP + diphosphate + H(+). Its pathway is amino-acid biosynthesis; L-histidine biosynthesis; L-histidine from 5-phospho-alpha-D-ribose 1-diphosphate: step 2/9. The polypeptide is Phosphoribosyl-ATP pyrophosphatase (Pyrobaculum islandicum (strain DSM 4184 / JCM 9189 / GEO3)).